Here is a 249-residue protein sequence, read N- to C-terminus: 2,3-bisphosphoglycerate-dependent phosphoglycerate mutase (249 aa).

Substrate contacts are provided by residues 11 to 18 (RHGNSEWN), 24 to 25 (TG), R63, 90 to 93 (ERHY), K101, 117 to 118 (RR), and 185 to 186 (GN). The active-site Tele-phosphohistidine intermediate is the H12. E90 acts as the Proton donor/acceptor in catalysis.

It belongs to the phosphoglycerate mutase family. BPG-dependent PGAM subfamily.

It catalyses the reaction (2R)-2-phosphoglycerate = (2R)-3-phosphoglycerate. It functions in the pathway carbohydrate degradation; glycolysis; pyruvate from D-glyceraldehyde 3-phosphate: step 3/5. Its function is as follows. Catalyzes the interconversion of 2-phosphoglycerate and 3-phosphoglycerate. This chain is 2,3-bisphosphoglycerate-dependent phosphoglycerate mutase, found in Leifsonia xyli subsp. xyli (strain CTCB07).